The following is a 332-amino-acid chain: DNA-directed RNA polymerase subunit alpha (332 aa).

The tract at residues Met1–Glu244 is alpha N-terminal domain (alpha-NTD). An alpha C-terminal domain (alpha-CTD) region spans residues Ile259 to Asn332.

The protein belongs to the RNA polymerase alpha chain family. Homodimer. The RNAP catalytic core consists of 2 alpha, 1 beta, 1 beta' and 1 omega subunit. When a sigma factor is associated with the core the holoenzyme is formed, which can initiate transcription.

The catalysed reaction is RNA(n) + a ribonucleoside 5'-triphosphate = RNA(n+1) + diphosphate. Functionally, DNA-dependent RNA polymerase catalyzes the transcription of DNA into RNA using the four ribonucleoside triphosphates as substrates. In Mesomycoplasma hyopneumoniae (strain 232) (Mycoplasma hyopneumoniae), this protein is DNA-directed RNA polymerase subunit alpha.